The primary structure comprises 447 residues: Dihydroorotase (447 aa).

Zn(2+) contacts are provided by histidine 81 and histidine 83. Residues 83–85 (HFR) and asparagine 115 each bind substrate. Zn(2+) contacts are provided by aspartate 171, histidine 198, and histidine 252. Asparagine 298 is a substrate binding site. Aspartate 325 lines the Zn(2+) pocket. Aspartate 325 is an active-site residue. Substrate contacts are provided by residues histidine 329 and 343-344 (FG).

It belongs to the metallo-dependent hydrolases superfamily. DHOase family. Class I DHOase subfamily. It depends on Zn(2+) as a cofactor.

It catalyses the reaction (S)-dihydroorotate + H2O = N-carbamoyl-L-aspartate + H(+). The protein operates within pyrimidine metabolism; UMP biosynthesis via de novo pathway; (S)-dihydroorotate from bicarbonate: step 3/3. Catalyzes the reversible cyclization of carbamoyl aspartate to dihydroorotate. The sequence is that of Dihydroorotase from Ehrlichia canis (strain Jake).